A 102-amino-acid polypeptide reads, in one-letter code: Small ribosomal subunit protein uS10 (102 aa).

The protein belongs to the universal ribosomal protein uS10 family. Part of the 30S ribosomal subunit.

In terms of biological role, involved in the binding of tRNA to the ribosomes. The protein is Small ribosomal subunit protein uS10 of Rhizobium meliloti (strain 1021) (Ensifer meliloti).